The chain runs to 603 residues: NADH-ubiquinone oxidoreductase chain 5 (603 aa).

16 helical membrane passes run 4 to 24 (FTTM…ATLI), 38 to 58 (TAIA…ICLG), 89 to 109 (FLPV…WYMA), 122 to 142 (LIFL…QLFI), 171 to 191 (AILY…WFLL), 211 to 233 (LPLL…HPWL), 241 to 261 (TPVS…FLLI), 273 to 293 (IQTL…ICAL), 301 to 320 (IVAF…IGIN), 325 to 347 (ALLH…GSII), 366 to 386 (MPLT…MPFL), 405 to 424 (NTWA…AYST), 457 to 477 (LMLG…PMSL), 488 to 508 (LAAL…NYLA), 524 to 544 (IMLG…SLLM), and 582 to 602 (GLIK…LLMI).

It belongs to the complex I subunit 5 family. In terms of assembly, core subunit of respiratory chain NADH dehydrogenase (Complex I) which is composed of 45 different subunits.

The protein localises to the mitochondrion inner membrane. It carries out the reaction a ubiquinone + NADH + 5 H(+)(in) = a ubiquinol + NAD(+) + 4 H(+)(out). In terms of biological role, core subunit of the mitochondrial membrane respiratory chain NADH dehydrogenase (Complex I) which catalyzes electron transfer from NADH through the respiratory chain, using ubiquinone as an electron acceptor. Essential for the catalytic activity and assembly of complex I. The protein is NADH-ubiquinone oxidoreductase chain 5 (MT-ND5) of Pongo abelii (Sumatran orangutan).